The sequence spans 541 residues: Long-chain-fatty-acid--CoA ligase (541 aa).

Thr184 is a binding site for Mg(2+). The ATP site is built by Val231 and Trp234. Tetradecanoyl-AMP-binding residues include Gly302, Gln322, Gly323, and Thr327. ATP contacts are provided by Gly323 and Thr327. Glu328 contributes to the Mg(2+) binding site. Residues Asp418, Lys435, Lys439, and Trp444 each contribute to the ATP site. 3 residues coordinate tetradecanoyl-AMP: Asp418, Lys435, and Lys439.

It belongs to the ATP-dependent AMP-binding enzyme family. As to quaternary structure, forms a domain swapped homodimer. It depends on Mg(2+) as a cofactor.

The catalysed reaction is a long-chain fatty acid + ATP + CoA = a long-chain fatty acyl-CoA + AMP + diphosphate. It catalyses the reaction tetradecanoate + ATP + CoA = tetradecanoyl-CoA + AMP + diphosphate. The enzyme catalyses hexadecanoate + ATP + CoA = hexadecanoyl-CoA + AMP + diphosphate. Its pathway is lipid metabolism; fatty acid metabolism. Catalyzes the esterification of a number of long chain fatty acids with CoA, resulting in the formation of long-chain fatty acyl-CoA. Myristate (C14) is the most efficiently processed fatty acid, followed by palmitate (C16). Also catalyzes the esterification of stearate (C18) and laurate (C12), but at lower efficiency. Does not catalyze the esterification of the unsaturated fatty acids mysteroleic and palmitoleic acids in vitro. This Thermus thermophilus (strain ATCC 27634 / DSM 579 / HB8) protein is Long-chain-fatty-acid--CoA ligase.